We begin with the raw amino-acid sequence, 188 residues long: Calcium load-activated calcium channel (188 aa).

Residues 1-4 (MSTM) lie on the Lumenal side of the membrane. The chain crosses the membrane as a helical span at residues 5 to 32 (FADTILIVFISICTALLAEGITWVLVYR). Positions 32-89 (RTDKYKRLKAEVEKQSKKLEKKKETITESAGRQQKKKIERQEEKLKNNNRDLSMVRMK) form a coiled coil. The Cytoplasmic portion of the chain corresponds to 33–86 (TDKYKRLKAEVEKQSKKLEKKKETITESAGRQQKKKIERQEEKLKNNNRDLSMV). A helical transmembrane segment spans residues 87–106 (RMKSMFAIGFCFTALMGMFN). Residues 107-120 (SIFDGRVVAKLPFV) are Lumenal-facing. The stretch at 121 to 130 (PLSYIQGLSH) is an intramembrane region. The Lumenal segment spans residues 131–140 (RNLLGEDYTD). The chain crosses the membrane as a helical span at residues 141–162 (CSFIFLYILCTMSIRQNIQKML). Residues 163–188 (GLAPSRAATKQAGGFLGPPPQAAKFS) are Cytoplasmic-facing.

Belongs to the TMCO1 family. Homodimer and homotetramer. Component of the multi-pass translocon (MPT) complex.

It localises to the endoplasmic reticulum membrane. The protein resides in the golgi apparatus membrane. In terms of biological role, calcium-selective channel required to prevent calcium stores from overfilling, thereby playing a key role in calcium homeostasis. In response to endoplasmic reticulum (ER) overloading, assembles into a homotetramer, forming a functional calcium-selective channel, regulating the calcium content in endoplasmic reticulum store. Component of the multi-pass translocon (MPT) complex that mediates insertion of multi-pass membrane proteins into the lipid bilayer of membranes. The chain is Calcium load-activated calcium channel from Danio rerio (Zebrafish).